The primary structure comprises 354 residues: Lysophosphatidic acid receptor 3 (354 aa).

Topologically, residues 1–31 (MNECHYDKRMDFFYNRSNTDTADEWTGTKLV) are extracellular. N15 is a glycosylation site (N-linked (GlcNAc...) asparagine). Residues 32-52 (IVLCVGTFFCLFIFFSNSLVI) form a helical membrane-spanning segment. The Cytoplasmic portion of the chain corresponds to 53–67 (AAVITNRKFHFPFYY). The helical transmembrane segment at 68–88 (LLANLAAADFFAGIAYVFLMF) threads the bilayer. Residues 89-101 (NTGPVSKTLTVNR) are Extracellular-facing. Residues 102–124 (WFLRQGLLDTSLTASLANLLVIA) traverse the membrane as a helical segment. At 125-146 (VERHMSIMRMRVHSNLTKKRVT) the chain is on the cytoplasmic side. The helical transmembrane segment at 147 to 167 (LLILLVWAIAIFMGAVPTLGW) threads the bilayer. Residues 168-186 (NCLCNISACSSLAPIYSRS) are Extracellular-facing. The N-linked (GlcNAc...) asparagine glycan is linked to N172. Residues 187–207 (YLIFWTVSNLLAFFIMVAVYV) form a helical membrane-spanning segment. At 208–240 (RIYMYVKRKTNVLSPHTSGSISRRRAPMKLMKT) the chain is on the cytoplasmic side. The helical transmembrane segment at 241–261 (VMTVLGAFVVCWTPGLVVLLL) threads the bilayer. Residues 262 to 276 (DGLNCKQCNVQHVKR) are Extracellular-facing. The chain crosses the membrane as a helical span at residues 277–295 (WFLLLALLNSVMNPIIYSY). The Cytoplasmic portion of the chain corresponds to 296–354 (KDEDMYNTMRKMICCALQDSNTERRPSRNPSTIHSRSETGSQYLEDSISQGPVCNKNGS). Residue C309 is the site of S-palmitoyl cysteine attachment. A disordered region spans residues 315–354 (SNTERRPSRNPSTIHSRSETGSQYLEDSISQGPVCNKNGS). Positions 323-354 (RNPSTIHSRSETGSQYLEDSISQGPVCNKNGS) are enriched in polar residues.

The protein belongs to the G-protein coupled receptor 1 family. As to expression, most abundantly expressed in testes, kidney, and lung, with moderate levels in small intestine, and low levels in heart, stomach, spleen, and adult and perinatal brain. Little or no expression in embryonic brain, liver, or thymus.

It is found in the cell membrane. In terms of biological role, receptor for lysophosphatidic acid (LPA), a mediator of diverse cellular activities. Seems to be coupled to the G(i)/G(o) and G(q) families of heteromeric G proteins. This is Lysophosphatidic acid receptor 3 (Lpar3) from Mus musculus (Mouse).